The primary structure comprises 428 residues: Glial fibrillary acidic protein (428 aa).

Residues Met1–Glu68 form a head region. The residue at position 7 (Thr7) is a Phosphothreonine; by AURKB and ROCK1. Residue Arg12 is modified to Omega-N-methylarginine. Ser13 is modified (phosphoserine; by AURKB and ROCK1). A citrulline mark is found at Arg26 and Arg32. Phosphoserine; by AURKB and ROCK1 is present on Ser34. Residues Glu65 to Ile373 form the IF rod domain. The tract at residues Met69–Leu100 is coil 1A. Ser78 is modified (phosphoserine). Residues Arg101 to Val111 are linker 1. 2 positions are modified to phosphothreonine: Thr106 and Thr146. The segment at Tyr112–Gln210 is coil 1B. The segment at Leu211–Asp226 is linker 12. The interval Leu227–Glu248 is coil 2A. The interval Ala249–Trp252 is linker 2. Positions Tyr253–Ile373 are coil 2B. Residue Arg266 is modified to Citrulline. Ser319 bears the Phosphoserine mark. Residues Thr374–Met428 form a tail region. Thr379 carries the post-translational modification Phosphothreonine. At Ser381 the chain carries Phosphoserine. Citrulline is present on residues Arg402 and Arg412.

It belongs to the intermediate filament family. As to quaternary structure, interacts with SYNM. Post-translationally, phosphorylated by PKN1.

Its subcellular location is the cytoplasm. GFAP, a class-III intermediate filament, is a cell-specific marker that, during the development of the central nervous system, distinguishes astrocytes from other glial cells. The polypeptide is Glial fibrillary acidic protein (GFAP) (Bos taurus (Bovine)).